The primary structure comprises 701 residues: ER-retained PMA1-suppressing protein 1 (701 aa).

The signal sequence occupies residues 1 to 27 (MKMNLKRLVVTFFSCITFLLKFTIAAA). In terms of domain architecture, Thioredoxin 1 spans 28 to 142 (EPPEGFPEPL…LIAFARRESM (115 aa)). A disulfide bridge connects residues C60 and C63. N85 is a glycosylation site (N-linked (GlcNAc...) asparagine). The cysteines at positions 200 and 203 are disulfide-linked. 3 N-linked (GlcNAc...) asparagine glycosylation sites follow: N264, N299, and N370. In terms of domain architecture, Thioredoxin 2 spans 408-446 (PTFFMFKDGDPISYVFPGYSTTEMRNIDAIMDWVKKYSN). The helical transmembrane segment at 646 to 666 (IIHGNGMPGYLIVIVLFIAIL) threads the bilayer.

This sequence belongs to the protein disulfide isomerase family. In terms of assembly, interacts with mutated PMA1-D378N but not wild type PMA1. Interacts with EUG1, KAR2, MPD1 and PDI1.

Its subcellular location is the endoplasmic reticulum membrane. It catalyses the reaction Catalyzes the rearrangement of -S-S- bonds in proteins.. Acts as a membrane-bound chaperone in endoplasmic reticulum quality control. Probably facilitates presentation of substrate to membrane-bound components of the degradation machinery. The polypeptide is ER-retained PMA1-suppressing protein 1 (EPS1) (Saccharomyces cerevisiae (strain ATCC 204508 / S288c) (Baker's yeast)).